The primary structure comprises 430 residues: Serine--tRNA ligase (430 aa).

235–237 is an L-serine binding site; that stretch reads TAE. ATP is bound by residues 266–268 and Val-282; that span reads RRE. Glu-289 provides a ligand contact to L-serine. 353-356 serves as a coordination point for ATP; it reads EASS. Ser-389 is an L-serine binding site.

It belongs to the class-II aminoacyl-tRNA synthetase family. Type-1 seryl-tRNA synthetase subfamily. Homodimer. The tRNA molecule binds across the dimer.

The protein resides in the cytoplasm. The catalysed reaction is tRNA(Ser) + L-serine + ATP = L-seryl-tRNA(Ser) + AMP + diphosphate + H(+). The enzyme catalyses tRNA(Sec) + L-serine + ATP = L-seryl-tRNA(Sec) + AMP + diphosphate + H(+). The protein operates within aminoacyl-tRNA biosynthesis; selenocysteinyl-tRNA(Sec) biosynthesis; L-seryl-tRNA(Sec) from L-serine and tRNA(Sec): step 1/1. In terms of biological role, catalyzes the attachment of serine to tRNA(Ser). Is also able to aminoacylate tRNA(Sec) with serine, to form the misacylated tRNA L-seryl-tRNA(Sec), which will be further converted into selenocysteinyl-tRNA(Sec). This chain is Serine--tRNA ligase, found in Chlorobium luteolum (strain DSM 273 / BCRC 81028 / 2530) (Pelodictyon luteolum).